A 482-amino-acid chain; its full sequence is MKIRTRYAPSPTGYLHIGGARTALFNYLLAKAYGGDFIIRIEDTDIERNVEGGINSQLDFLAWMGIIPDESIRNPKAFGPYIQSEKLKHYEKLALDLVDQKKAYFCFCSKEQLDADRELAEKSHQTPKYKRHCLNLDKKTIESNLLQNKEYTIRLKINENMEYSWDDLIRGKISIPGSALTDPVILKSNKIAMYNFAVVIDDYEMQISHVIRGEEHISNTPYQLAIAQALNYDITKIKYGHLSIIVDETGKKLSKRNLSLKQFVSDYEKDGYWPHAITNFVALLGWSPKNNDEIMSLETMIKNFDINNLSKSPAFFDINKMNWFSTQYFNNITQEEFINFIKKHSLTKELVLNDYTFINKCLLFKSHIINLKQLIDLVIEQFNCDKKVLASDVDYIKKNQLITVVRVFYEQLIINDEFNEEFIKEIIKKVQIITNNKGANLYMPIRIATTFSSHGPELAKTICYLGREKVLKNLINILKILD.

Positions 9 to 19 match the 'HIGH' region motif; that stretch reads PSPTGYLHIGG. The 'KMSKS' region motif lies at 252 to 256; that stretch reads KLSKR. Residue K255 coordinates ATP.

This sequence belongs to the class-I aminoacyl-tRNA synthetase family. Glutamate--tRNA ligase type 1 subfamily. In terms of assembly, monomer.

It is found in the cytoplasm. The enzyme catalyses tRNA(Glu) + L-glutamate + ATP = L-glutamyl-tRNA(Glu) + AMP + diphosphate. Functionally, catalyzes the attachment of glutamate to tRNA(Glu) in a two-step reaction: glutamate is first activated by ATP to form Glu-AMP and then transferred to the acceptor end of tRNA(Glu). The chain is Glutamate--tRNA ligase from Ureaplasma parvum serovar 3 (strain ATCC 27815 / 27 / NCTC 11736).